Here is a 96-residue protein sequence, read N- to C-terminus: MKWILVLALVCLAVEYSYSWKVSERCLKGHGKFQADQEIGNGLATAKGQCKGTDSDQKKAGKCDKHCTGVCLGSGGSCGDGSSQKPNKEDCYCKSK.

A signal peptide spans methionine 1 to serine 19. Cystine bridges form between cysteine 26/cysteine 71, cysteine 50/cysteine 78, cysteine 63/cysteine 91, and cysteine 67/cysteine 93.

It localises to the secreted. In terms of biological role, salivary protein that inhibits host voltage-gated sodium channel Nav1.5/SCN5A. This Xenopsylla cheopis (Oriental rat flea) protein is Salivary protein FS50.